The sequence spans 142 residues: Hemoglobin subunit alpha-2 (142 aa).

The region spanning 2 to 142 is the Globin domain; sequence VLSAADKTNV…VSTVLTSKYR (141 aa). O2 is bound at residue histidine 59. Histidine 88 is a heme b binding site.

Belongs to the globin family. Heterotetramer of two alpha chains and two beta chains. Red blood cells.

Functionally, involved in oxygen transport from the lung to the various peripheral tissues. Hemopressin acts as an antagonist peptide of the cannabinoid receptor CNR1. Hemopressin-binding efficiently blocks cannabinoid receptor CNR1 and subsequent signaling. The polypeptide is Hemoglobin subunit alpha-2 (HBA2) (Equus quagga burchellii (Burchell's zebra)).